The sequence spans 296 residues: 4-hydroxy-tetrahydrodipicolinate synthase (296 aa).

Threonine 49 is a binding site for pyruvate. Catalysis depends on tyrosine 137, which acts as the Proton donor/acceptor. Lysine 166 functions as the Schiff-base intermediate with substrate in the catalytic mechanism. Isoleucine 208 contributes to the pyruvate binding site.

The protein belongs to the DapA family. In terms of assembly, homotetramer; dimer of dimers.

It localises to the cytoplasm. It catalyses the reaction L-aspartate 4-semialdehyde + pyruvate = (2S,4S)-4-hydroxy-2,3,4,5-tetrahydrodipicolinate + H2O + H(+). Its pathway is amino-acid biosynthesis; L-lysine biosynthesis via DAP pathway; (S)-tetrahydrodipicolinate from L-aspartate: step 3/4. Its function is as follows. Catalyzes the condensation of (S)-aspartate-beta-semialdehyde [(S)-ASA] and pyruvate to 4-hydroxy-tetrahydrodipicolinate (HTPA). This Azobacteroides pseudotrichonymphae genomovar. CFP2 protein is 4-hydroxy-tetrahydrodipicolinate synthase.